A 163-amino-acid chain; its full sequence is Acetolactate synthase small subunit (163 aa).

In terms of domain architecture, ACT spans 4 to 79 (ILSVLLENES…VFKVVNLSEQ (76 aa)).

Belongs to the acetolactate synthase small subunit family. Dimer of large and small chains.

It catalyses the reaction 2 pyruvate + H(+) = (2S)-2-acetolactate + CO2. The protein operates within amino-acid biosynthesis; L-isoleucine biosynthesis; L-isoleucine from 2-oxobutanoate: step 1/4. It functions in the pathway amino-acid biosynthesis; L-valine biosynthesis; L-valine from pyruvate: step 1/4. In Haemophilus influenzae (strain ATCC 51907 / DSM 11121 / KW20 / Rd), this protein is Acetolactate synthase small subunit (ilvH).